The following is a 1816-amino-acid chain: uncharacterized protein (1816 aa).

2 disordered regions span residues 338 to 357 and 562 to 605; these read DSSS…NNNN and ELEK…IKPK. Low complexity predominate over residues 339 to 357; it reads SSSSSSNNNNNNNNNNNNN. Basic and acidic residues predominate over residues 562–577; that stretch reads ELEKERIKKEKEDSKK. Low complexity predominate over residues 581-603; the sequence is KQSSSSSSSSTTTTSTTTSSTIK. One can recognise a Helicase ATP-binding domain in the interval 826-999; it reads LDIVDKRESA…FLKKIDPNRK (174 aa). 839 to 846 lines the ATP pocket; sequence ASTSSGKT. A DEAH box motif is present at residues 949 to 952; it reads DEVH. The Helicase C-terminal domain occupies 1198 to 1379; that stretch reads QLDLVIERFQ…SVVSPSLCLS (182 aa). A disordered region spans residues 1388–1487; that stretch reads TNGSANKSNE…TTTKTPTTTS (100 aa). Residues 1395-1427 show a composition bias toward basic and acidic residues; the sequence is SNEENKVQVKENEKEREKEKEKEKEKEKEKETI. Residues 1445-1454 are compositionally biased toward acidic residues; the sequence is NWDDDEEETA. The span at 1456–1487 shows a compositional bias: low complexity; that stretch reads STKTTPATTPTTTTTENTPATTTTTKTPTTTS.

This sequence belongs to the helicase family. SKI2 subfamily.

The protein localises to the nucleus. This is an uncharacterized protein from Dictyostelium discoideum (Social amoeba).